A 445-amino-acid chain; its full sequence is Phosphoglucosamine mutase (445 aa).

Serine 99 serves as the catalytic Phosphoserine intermediate. Residues serine 99, aspartate 242, aspartate 244, and aspartate 246 each coordinate Mg(2+). Phosphoserine is present on serine 99.

It belongs to the phosphohexose mutase family. It depends on Mg(2+) as a cofactor. Activated by phosphorylation.

It carries out the reaction alpha-D-glucosamine 1-phosphate = D-glucosamine 6-phosphate. Catalyzes the conversion of glucosamine-6-phosphate to glucosamine-1-phosphate. The protein is Phosphoglucosamine mutase of Nitratiruptor sp. (strain SB155-2).